The sequence spans 320 residues: rRNA 2'-O-methyltransferase fibrillarin 2 (320 aa).

The interval 1–79 (MRPPLTGSGG…GRGGMKGGSK (79 aa)) is disordered. Composition is skewed to gly residues over residues 7-44 (GSGG…GGRG) and 57-76 (PPRG…GMKG). S-adenosyl-L-methionine contacts are provided by residues 167–168 (TT), 186–187 (EF), 211–212 (DA), and 231–234 (DVAQ).

It belongs to the methyltransferase superfamily. Fibrillarin family. Component of box C/D small nucleolar ribonucleoprotein (snoRNP) particles. Interacts with groundnut rosette virus long-distance movement protein; this interaction is required for virus long-distance movement protein transiting through host Cajal body and nucleolus, relocalization of fibrillarin to the cytoplasm, and in presence of viral RNA, leads to the formation of stable RNPs. Interacts (via GAR domain) with the hordeivirus TGB1 movement protein (via the first 82 amino acid residues). Interacts with PRMT11 and PRMT12. Interacts with MED19A. In terms of processing, methylated by PRMT11 and PRMT12. As to expression, expressed in roots and flowers. Expressed in leaves and stems. Expression levels decrease during aging.

The protein resides in the nucleus. The protein localises to the nucleolus. The enzyme catalyses a ribonucleotide in rRNA + S-adenosyl-L-methionine = a 2'-O-methylribonucleotide in rRNA + S-adenosyl-L-homocysteine + H(+). It carries out the reaction L-glutaminyl-[histone H2A] + S-adenosyl-L-methionine = N(5)-methyl-L-glutaminyl-[histone H2A] + S-adenosyl-L-homocysteine + H(+). In terms of biological role, S-adenosyl-L-methionine-dependent methyltransferase that has the ability to methylate both RNAs and proteins. Involved in pre-rRNA processing. Utilizes the methyl donor S-adenosyl-L-methionine to catalyze the site-specific 2'-hydroxyl methylation of ribose moieties in pre-ribosomal RNA. Site specificity is provided by a guide RNA that base pairs with the substrate. Methylation occurs at a characteristic distance from the sequence involved in base pairing with the guide RNA. Also acts as a protein methyltransferase by mediating methylation of 'Gln-105' of histone H2A (H2AQ105me), a modification that impairs binding of the FACT complex and is specifically present at 35S ribosomal DNA locus. Acts as a negative regulator of expression of immune responsive genes, including pathogenesis-related gene 1 (PR1), and of resistance against bacterial pathogen. Binds to MED19A, a positive regulator of PR1 expression, to repress the activator activity of MED19A. In response to the bacterial pathogen-associated molecular pattern (PAMP) elf18, associates with the long non-coding RNA (lncRNA) ELENA1 (At4g16355), and releases its repression of MED19A. Possesses ribonuclease activity toward rRNA in vitro. Binds phosphoinositides, phospholipids and phosphatidic acid in vitro. The chain is rRNA 2'-O-methyltransferase fibrillarin 2 from Arabidopsis thaliana (Mouse-ear cress).